A 125-amino-acid chain; its full sequence is Small ribosomal subunit protein uS12 (125 aa).

The disordered stretch occupies residues 1-31 (MPTINQLVRHGRQTEVTKSKSPAMQGGPQRR). Residue Asp89 is modified to 3-methylthioaspartic acid. Residues 105–125 (QGVKDRKQSRSKYGAKRPKKA) are disordered. The segment covering 113–125 (SRSKYGAKRPKKA) has biased composition (basic residues).

Belongs to the universal ribosomal protein uS12 family. Part of the 30S ribosomal subunit. Contacts proteins S8 and S17. May interact with IF1 in the 30S initiation complex.

With S4 and S5 plays an important role in translational accuracy. Its function is as follows. Interacts with and stabilizes bases of the 16S rRNA that are involved in tRNA selection in the A site and with the mRNA backbone. Located at the interface of the 30S and 50S subunits, it traverses the body of the 30S subunit contacting proteins on the other side and probably holding the rRNA structure together. The combined cluster of proteins S8, S12 and S17 appears to hold together the shoulder and platform of the 30S subunit. The chain is Small ribosomal subunit protein uS12 from Methylibium petroleiphilum (strain ATCC BAA-1232 / LMG 22953 / PM1).